The primary structure comprises 384 residues: MLLVLVLIGLNMRPLLTSVGPLLPQLRQASGMSFSVAALLTALPVVTMGGLALAGSWLHQHVSERRSVAISLLLIAVGALMRELYPQSALLLSSALLGGVGIGIIQAVMPSVIKRRFQQRTPLVMGLWSAALMGGGGLGAAITPWLVQHSETWYQTLAWWALPAVVALFAWWWQSAREVASSHKTTTTPVRVVFTPRAWTLGVYFGLINGGYASLIAWLPAFYIEIGASAQYSGSLLALMTLGQAAGALLMPAMARHQDRRKLLMLALVLQLVGFCGFIWLPMQLPVLWAMVCGLGLGGAFPLCLLLALDHSVQPAIAGKLVAFMQGIGFIIAGLAPWFSGVLRSISGNYLMDWAFHALCVVGLMIITLRFAPVRFPQLWVKEA.

The next 12 membrane-spanning stretches (helical) occupy residues 3–23 (LVLV…GPLL), 34–54 (FSVA…LALA), 68–88 (VAIS…YPQS), 89–109 (ALLL…QAVM), 122–142 (PLVM…GAAI), 153–173 (WYQT…AWWW), 204–224 (YFGL…AFYI), 235–255 (SLLA…PAMA), 263–283 (LLML…WLPM), 287–307 (VLWA…CLLL), 322–342 (VAFM…FSGV), and 354–374 (WAFH…FAPV).

It belongs to the major facilitator superfamily. Cyanate porter (TC 2.A.1.17) family.

It is found in the cell inner membrane. Functionally, this protein is part of an active transport system that transports exogenous cyanate into E.coli cells. The chain is Cyanate transport protein CynX (cynX) from Escherichia coli (strain K12).